The sequence spans 142 residues: Hemoglobin subunit alpha (142 aa).

Serine 1 carries the N-acetylserine modification. Residues 1–142 form the Globin domain; that stretch reads SLSDKDKAAV…VALALAERYR (142 aa). Histidine 59 is an O2 binding site. Histidine 88 contributes to the heme b binding site.

The protein belongs to the globin family. Heterotetramer of two alpha chains and two beta chains. As to expression, red blood cells.

Involved in oxygen transport from gills to the various peripheral tissues. The polypeptide is Hemoglobin subunit alpha (hba) (Gymnodraco acuticeps (Antarctic dragonfish)).